Consider the following 1334-residue polypeptide: Aldehyde oxidase 3 (1334 aa).

The 2Fe-2S ferredoxin-type domain maps to 8–95 (DELIFFVNGK…GAAVTTVEGI (88 aa)). Residues Cys47, Cys52, Cys55, and Cys77 each coordinate [2Fe-2S] cluster. Gln116 serves as a coordination point for Mo-molybdopterin. Cys117, Cys120, Cys152, and Cys154 together coordinate [2Fe-2S] cluster. Residues 236–421 (FRGERTTWIA…ISVFVPLSRK (186 aa)) form the FAD-binding PCMH-type domain. An FAD-binding site is contributed by 264–271 (LVIGNTCL). At Ser320 the chain carries Phosphoserine. FAD-binding residues include Ser354, His358, Asp367, and Leu411. Residues Gly801, Leu1042, and Gln1198 each coordinate Mo-molybdopterin. The Proton acceptor; for azaheterocycle hydroxylase activity role is filled by Glu1265.

It belongs to the xanthine dehydrogenase family. In terms of assembly, homodimer. [2Fe-2S] cluster serves as cofactor. Requires FAD as cofactor. It depends on Mo-molybdopterin as a cofactor.

It localises to the cytoplasm. It catalyses the reaction an aldehyde + O2 + H2O = a carboxylate + H2O2 + H(+). Its function is as follows. Oxidase with broad substrate specificity, oxidizing aromatic azaheterocycles, such as N1-methylnicotinamide and phthalazine, as well as aldehydes, such as benzaldehyde, retinal and pyridoxal. Plays a key role in the metabolism of xenobiotics and drugs containing aromatic azaheterocyclic substituents. Is probably involved in the regulation of reactive oxygen species homeostasis. Is a prominent source of superoxide generation via the one-electron reduction of molecular oxygen. Also catalyzes nitric oxide (NO) production; under anaerobic conditions, reduces nitrite to NO with NADH or aldehyde as electron donor, but under aerobic conditions, NADH is the preferred substrate. These reactions may be catalyzed by several isozymes. This chain is Aldehyde oxidase 3 (Aox3), found in Rattus norvegicus (Rat).